The sequence spans 207 residues: Vexin (207 aa).

A disordered region spans residues 56–100 (ELLPHRGDRRDPGDRRRFGRLQTARPPTAHPAKASARPVGISEPK). The span at 58–71 (LPHRGDRRDPGDRR) shows a compositional bias: basic and acidic residues.

Belongs to the vexin family.

The protein localises to the cell membrane. The protein resides in the nucleus. In terms of biological role, required for neurogenesis in the neural plate and retina. Strongly cooperates with neural bHLH factors to promote neurogenesis. This is Vexin from Homo sapiens (Human).